Consider the following 555-residue polypeptide: MAVAAWLQVSPVIFLLLGAQPFPLSFLGAGPAPVFAADRSKWHIPMPSGKGYFNFGKILFRNTTILLKFDGEPCDQSLNITWFLKSADCYNEIYNFKADEIESYLENLKGKKGLSGRYQTSSRLFQNCSELYKAQSFSGDFTHRLPLLGEKQEAKENATNVTFTGDKIAMHEPLQTWQDAPYIFIVHVGISSSKESPKENALSNLFTMTVEVKGPYEYLTLEDYPLMIFFMVMCIVYVLFGVLWLAWSACYWRDLLRIQFWIGAVIFLGMFEKAVFYAEFQNIRYKGESVQNALVLAELLSAVKRSLARTLVIIVSLGYGIVKPRLGVTLHKVVVAGALYLLFSGMEGVLRVTGAQTDLASLAFIPLAFLDTALCWWIFISLTQTMKLLKLRRNIVKLSLYRHFTNTLILAVAASIVFIIWTTMKFRIVTCQSDWRELWVDDAIWRLLFSMILFVIMILWRPSANNQRFAFSPLSEEDEEDEQKEPMLKESFEGMKMRSTKQEPNGTSKVNKAQEDDLKWVEENVPSSVTDVALPALLDSDEERMITHFERSKME.

A signal peptide spans 1-21 (MAVAAWLQVSPVIFLLLGAQP). The Lumenal portion of the chain corresponds to 22 to 225 (FPLSFLGAGP…YEYLTLEDYP (204 aa)). Disulfide bonds link C74-C128 and C89-C431. 3 N-linked (GlcNAc...) asparagine glycosylation sites follow: N79, N157, and N160. Residues 226–246 (LMIFFMVMCIVYVLFGVLWLA) form a helical membrane-spanning segment. At 247 to 257 (WSACYWRDLLR) the chain is on the cytoplasmic side. A helical membrane pass occupies residues 258 to 278 (IQFWIGAVIFLGMFEKAVFYA). The Lumenal portion of the chain corresponds to 279 to 305 (EFQNIRYKGESVQNALVLAELLSAVKR). A helical membrane pass occupies residues 306-322 (SLARTLVIIVSLGYGIV). The Cytoplasmic segment spans residues 323–325 (KPR). Residues 326-346 (LGVTLHKVVVAGALYLLFSGM) traverse the membrane as a helical segment. At 347-361 (EGVLRVTGAQTDLAS) the chain is on the lumenal side. The chain crosses the membrane as a helical span at residues 362-382 (LAFIPLAFLDTALCWWIFISL). Topologically, residues 383-403 (TQTMKLLKLRRNIVKLSLYRH) are cytoplasmic. A helical transmembrane segment spans residues 404-424 (FTNTLILAVAASIVFIIWTTM). The Lumenal segment spans residues 425-437 (KFRIVTCQSDWRE). Residues 438–458 (LWVDDAIWRLLFSMILFVIMI) traverse the membrane as a helical segment. Residues 459–555 (LWRPSANNQR…ITHFERSKME (97 aa)) lie on the Cytoplasmic side of the membrane. Residues 491–515 (SFEGMKMRSTKQEPNGTSKVNKAQE) are disordered. Residues 502-511 (QEPNGTSKVN) show a composition bias toward polar residues. S540 carries the post-translational modification Phosphoserine.

The protein belongs to the LU7TM family. TMEM87 subfamily. May interact with STOML3; STOML3 potentiates the mechanosensitive ion channel activity associated with TMEM87A. In terms of tissue distribution, highly expressed in sensory neurons responsive to mechanical force.

It localises to the cell membrane. The protein localises to the golgi apparatus membrane. It is found in the cell projection. Its subcellular location is the ruffle. Potential monoatomic ion channel gated by mechanical force, implicated in normal touch sensitivity through the generation of mechanically activated currents. However, a direct channel activity is debated and an alternative could be that it functions as a chaperone for an unidentified mechanosensitive ion channel. Could also be involved in cell mechanosensitivity regulating cell adhesion and migration. May also be involved in retrograde transport from endosomes to the trans-Golgi network (TGN). This is Transmembrane protein 87A from Mus musculus (Mouse).